The sequence spans 892 residues: Alanine--tRNA ligase (892 aa).

Zn(2+)-binding residues include His596, His600, Cys700, and His704.

It belongs to the class-II aminoacyl-tRNA synthetase family. Zn(2+) is required as a cofactor.

The protein localises to the cytoplasm. The enzyme catalyses tRNA(Ala) + L-alanine + ATP = L-alanyl-tRNA(Ala) + AMP + diphosphate. Its function is as follows. Catalyzes the attachment of alanine to tRNA(Ala) in a two-step reaction: alanine is first activated by ATP to form Ala-AMP and then transferred to the acceptor end of tRNA(Ala). Also edits incorrectly charged Ser-tRNA(Ala) and Gly-tRNA(Ala) via its editing domain. This is Alanine--tRNA ligase from Methanococcus maripaludis (strain C7 / ATCC BAA-1331).